The following is a 286-amino-acid chain: Rhomboid-type serine protease 2 (286 aa).

A run of 6 helical transmembrane segments spans residues 18 to 38 (ITQY…LLVI), 66 to 86 (SFYL…VGLF), 99 to 119 (VFTG…FCIV), 122 to 142 (LLYP…FMSF), 164 to 183 (VSIP…MVLI), and 188 to 210 (FWGH…KFLY). The active-site Nucleophile is Ser133. His191 is an active-site residue.

It belongs to the peptidase S54 family.

The protein localises to the golgi apparatus membrane. Its subcellular location is the golgi apparatus. It localises to the cis-Golgi network membrane. It catalyses the reaction Cleaves type-1 transmembrane domains using a catalytic dyad composed of serine and histidine that are contributed by different transmembrane domains.. Its function is as follows. Probable rhomboid-type serine protease that catalyzes intramembrane proteolysis. In Debaryomyces hansenii (strain ATCC 36239 / CBS 767 / BCRC 21394 / JCM 1990 / NBRC 0083 / IGC 2968) (Yeast), this protein is Rhomboid-type serine protease 2 (RBD2).